Consider the following 92-residue polypeptide: Cell division topological specificity factor (92 aa).

It belongs to the MinE family.

Its function is as follows. Prevents the cell division inhibition by proteins MinC and MinD at internal division sites while permitting inhibition at polar sites. This ensures cell division at the proper site by restricting the formation of a division septum at the midpoint of the long axis of the cell. This Colwellia psychrerythraea (strain 34H / ATCC BAA-681) (Vibrio psychroerythus) protein is Cell division topological specificity factor.